The following is a 66-amino-acid chain: Large ribosomal subunit protein bL35 (66 aa).

Belongs to the bacterial ribosomal protein bL35 family.

The protein is Large ribosomal subunit protein bL35 of Synechococcus sp. (strain RCC307).